Reading from the N-terminus, the 1851-residue chain is Chitin synthase (1851 aa).

Residues 1–21 form a disordered region; that stretch reads MQYHQHQHQFPGPGPSHTSVY. Topologically, residues 1–108 are cytoplasmic; it reads MQYHQHQHQF…KDTLYNGFLQ (108 aa). Residues 109–129 form a helical membrane-spanning segment; the sequence is VLKMITFVALFVTTLGSSILA. Residues 130-168 lie on the Extracellular side of the membrane; that stretch reads KLSLLVMAAGLGQAGHNISICPDKIPESPKNSVLISPKN. N-linked (GlcNAc...) asparagine glycosylation occurs at Asn-146. A helical transmembrane segment spans residues 169 to 189; it reads AAKWAWALLLAICIPELLCFA. At 190–208 the chain is on the cytoplasmic side; that stretch reads RSLHRSLFRKVRGPSFLQF. The helical transmembrane segment at 209-229 threads the bilayer; the sequence is LLVFTVESVHAFGLGALVFAI. Over 230–234 the chain is Extracellular; the sequence is MPRGM. A helical membrane pass occupies residues 235-255; the sequence is VITMLQLGNSLCLIPSLLLPL. At 256-261 the chain is on the cytoplasmic side; sequence SRSRSR. A helical membrane pass occupies residues 262–282; sequence WLPLLLLLDGSAILAQSSAAI. At 283–291 the chain is on the extracellular side; that stretch reads WRGSIPLER. A helical membrane pass occupies residues 292–312; sequence FGFVFLCTSLISIAWWQNFVH. Topologically, residues 313–337 are cytoplasmic; the sequence is PHSFLPATRFFAHYAAKLRECRSKT. A helical transmembrane segment spans residues 338 to 358; it reads FVVLSPWKCLIFTFCMFQFVP. The Extracellular segment spans residues 359-544; that stretch reads PQIPFRELLQ…ELNQFTTAND (186 aa). Residues Asn-385 and Asn-435 are each glycosylated (N-linked (GlcNAc...) asparagine). The disordered stretch occupies residues 432 to 522; that stretch reads LFRNGTRRPP…DADEQEEEEE (91 aa). The span at 442-454 shows a compositional bias: basic and acidic residues; it reads KKEEVKKNKMDSK. The span at 455–465 shows a compositional bias: basic residues; sequence KKTKKLKKKKG. The span at 466-478 shows a compositional bias: low complexity; that stretch reads GNNNATSTNSSEK. Residues Asn-469 and Asn-474 are each glycosylated (N-linked (GlcNAc...) asparagine). A compositionally biased stretch (acidic residues) spans 513–522; the sequence is DADEQEEEEE. The helical transmembrane segment at 545–565 threads the bilayer; the sequence is ALWLVFVQAGSVLLCQLCAKF. The Cytoplasmic segment spans residues 566–573; that stretch reads ACKVVMQR. Residues 574–594 form a helical membrane-spanning segment; that stretch reads VGLALPVVLSIPFGILFLAYS. Residues 595–631 lie on the Extracellular side of the membrane; that stretch reads CRQKATNPCHLSEWMSKELFWQCPTRPFHWQRFFREQ. The helical transmembrane segment at 632 to 652 threads the bilayer; the sequence is PNLLWLCWWLSQCWITIHLWL. Residues 653–1124 are Cytoplasmic-facing; it reads PRQERLAKSE…VSIWYIAYQL (472 aa). A disordered region spans residues 693–718; sequence SEDIDTEEEANEGGGEQEDGNSSTHT. A compositionally biased stretch (acidic residues) spans 696–711; it reads IDTEEEANEGGGEQED. The helical transmembrane segment at 1125 to 1145 threads the bilayer; the sequence is VMLFSSVLGPGTIFLMIVGAI. The Extracellular segment spans residues 1146–1154; that stretch reads SISFNIDTR. Residues 1155-1175 traverse the membrane as a helical segment; it reads LALLIVTTPVLCFCVCCLTCG. Over 1176 to 1179 the chain is Cytoplasmic; the sequence is TETQ. A helical transmembrane segment spans residues 1180–1200; sequence LLLAQVIGALFAMLMTAVIVG. At 1201–1209 the chain is on the extracellular side; the sequence is TSLQIQKDG. A helical transmembrane segment spans residues 1210–1230; the sequence is LLSPHSIFLFTVLGSWSFSAL. Over 1231-1235 the chain is Cytoplasmic; sequence LHPLE. Residues 1236–1256 form a helical membrane-spanning segment; sequence FGCLLPCGLYFLAIPCMYMLL. At 1257-1461 the chain is on the extracellular side; it reads PVYSLCNLNT…QRGLNELRNT (205 aa). N-linked (GlcNAc...) asparagine glycosylation occurs at Asn-1274. Residues 1329-1383 adopt a coiled-coil conformation; the sequence is CADETVEVRKLDENFRKIERKLQSLERRTNGQGNNAEEEGKEEEETGKSEQERKE. Residues 1350–1402 are disordered; that stretch reads LQSLERRTNGQGNNAEEEGKEEEETGKSEQERKEGREEGKEEEGKMSKRKKEE. The span at 1364–1373 shows a compositional bias: acidic residues; it reads AEEEGKEEEE. Residues 1374-1402 show a composition bias toward basic and acidic residues; that stretch reads TGKSEQERKEGREEGKEEEGKMSKRKKEE. A helical membrane pass occupies residues 1462 to 1482; it reads CCSAFFMVNIVFIIVVLVLQL. Topologically, residues 1483-1527 are cytoplasmic; that stretch reads QKDCLHIEWPLGPLVNQTRVQCGGGGGRDFEGEEWIMSRLQLEPM. The chain crosses the membrane as a helical span at residues 1528 to 1548; sequence GFVFIVFFLIILFIQFLAMLF. Residues 1549–1851 lie on the Extracellular side of the membrane; sequence HRFGTFTHII…FLGTTNKRAK (303 aa). Residues 1626–1658 form a disordered region; it reads GKRQQNAQIPPRCEKGGNERGEESPTSLPAPPV. The segment covering 1637 to 1648 has biased composition (basic and acidic residues); that stretch reads RCEKGGNERGEE. Asn-1660 carries an N-linked (GlcNAc...) asparagine glycan. Residues 1765–1851 are disordered; it reads HSIFPSSSES…FLGTTNKRAK (87 aa). Positions 1781 to 1822 are enriched in basic and acidic residues; the sequence is GGGRGRGREQERDKCLEGKKEKFRQRVEEGPARCHRLEELFG. The span at 1823–1834 shows a compositional bias: basic residues; sequence KSRKGGPQKRGK.

Belongs to the chitin synthase family. Class IV subfamily. Post-translationally, may require proteolytic cleavage for activation.

The protein localises to the cell membrane. The enzyme catalyses [(1-&gt;4)-N-acetyl-beta-D-glucosaminyl](n) + UDP-N-acetyl-alpha-D-glucosamine = [(1-&gt;4)-N-acetyl-beta-D-glucosaminyl](n+1) + UDP + H(+). Required for the synthesis of chitin. The polypeptide is Chitin synthase (Meloidogyne artiellia (British root-knot nematode)).